The primary structure comprises 315 residues: Probable cell division protein WhiA (315 aa).

Residues 278-312 (SLSDLAGMIEGQELTKSGINHRMRKLMQIVKELNH) constitute a DNA-binding region (H-T-H motif).

This sequence belongs to the WhiA family.

Functionally, involved in cell division and chromosome segregation. The protein is Probable cell division protein WhiA of Oenococcus oeni (strain ATCC BAA-331 / PSU-1).